Reading from the N-terminus, the 308-residue chain is Polyprenyl-phosphate transporter (308 aa).

8 helical membrane-spanning segments follow: residues 15-35, 69-89, 91-111, 130-150, 163-183, 200-220, 228-248, and 282-302; these read GLAMGAADVVPGVSGGTIAFI, INGLFLITLFGGIFTSIATLA, LISWLLVTHPIPIWSFFFGLI, LLWLIAGAIFAYGITVLKPLH, AIAICAMILPGISGSFILLLI, ILLIFLTGCVIGLLSFSHILS, DVTLTFLTGLMLGTLPKIWPW, and PSQWLLALVLMLAAVALVLGL.

Belongs to the PopT family.

It localises to the cell inner membrane. With respect to regulation, active in alkaline conditions. Its function is as follows. Flippase that catalyzes the transport of undecaprenyl phosphate (UndP) across the cytoplasmic membrane, from the external side to the cytoplasmic side. Is involved in UndP recycling during peptidoglycan synthesis. Required for cell shape maintenance at alkaline pH and peptidoglycan maintenance. Required by the cholera pathogen for growth and cell shape maintenance in the intestine. The sequence is that of Polyprenyl-phosphate transporter from Vibrio cholerae serotype O1 (strain ATCC 39315 / El Tor Inaba N16961).